Consider the following 349-residue polypeptide: Putative inosamine-phosphate amidinotransferase 2 (349 aa).

The protein belongs to the amidinotransferase family.

It carries out the reaction 1-amino-1-deoxy-scyllo-inositol 4-phosphate + L-arginine = 1-guanidino-1-deoxy-scyllo-inositol 4-phosphate + L-ornithine. The protein operates within antibiotic biosynthesis; streptomycin biosynthesis. In terms of biological role, it is not obvious if strB2 participates in streptomycin biosynthesis as an inosamine-phosphate amidinotransferase. Attempt to measure its activity have failed and the nucleophilic cysteine which is the key residue for amidine transfer is not conserved but replaced by a glycine residue. This chain is Putative inosamine-phosphate amidinotransferase 2 (strB2), found in Streptomyces griseus.